Consider the following 396-residue polypeptide: NADH-quinone oxidoreductase subunit D (396 aa).

This sequence belongs to the complex I 49 kDa subunit family. In terms of assembly, NDH-1 is composed of 14 different subunits. Subunits NuoB, C, D, E, F, and G constitute the peripheral sector of the complex.

Its subcellular location is the cell inner membrane. It carries out the reaction a quinone + NADH + 5 H(+)(in) = a quinol + NAD(+) + 4 H(+)(out). In terms of biological role, NDH-1 shuttles electrons from NADH, via FMN and iron-sulfur (Fe-S) centers, to quinones in the respiratory chain. The immediate electron acceptor for the enzyme in this species is believed to be ubiquinone. Couples the redox reaction to proton translocation (for every two electrons transferred, four hydrogen ions are translocated across the cytoplasmic membrane), and thus conserves the redox energy in a proton gradient. In Methylorubrum populi (strain ATCC BAA-705 / NCIMB 13946 / BJ001) (Methylobacterium populi), this protein is NADH-quinone oxidoreductase subunit D.